The chain runs to 238 residues: Tetraspanin-4 (238 aa).

At 1–13 (MARACLQAVKYLM) the chain is on the cytoplasmic side. A helical transmembrane segment spans residues 14-34 (FAFNLLFWLGGCGVLGVGIWL). Residues 35–55 (AATQGSFATLSSSFPSLSAAN) lie on the Extracellular side of the membrane. The helical transmembrane segment at 56–76 (LLIITGAFVMAIGFVGCLGAI) threads the bilayer. Residues 77-85 (KENKCLLLT) lie on the Cytoplasmic side of the membrane. A helical transmembrane segment spans residues 86-106 (FFLLLLLVFLLEATIAILFFA). The Extracellular portion of the chain corresponds to 107 to 201 (YTDKIDRYAQ…ETVKVWLQEN (95 aa)). N-linked (GlcNAc...) asparagine glycosylation is found at asparagine 152 and asparagine 161. A helical membrane pass occupies residues 202-222 (LLAVGIFGLCTALVQILGLTF). The Cytoplasmic portion of the chain corresponds to 223-238 (AMTMYCQVVKADTYCA).

This sequence belongs to the tetraspanin (TM4SF) family. Forms a complex with integrins. Interacts with HRH4. As to expression, expressed in multiple tissues but is absent in brain, lymphoid cells, and platelets.

It localises to the cell membrane. Structural component of specialized membrane microdomains known as tetraspanin-enriched microdomains (TERMs), which act as platforms for receptor clustering and signaling. Plays an essential role in migrasome formation and migration on retracting fibers at the rear end of migrating cells. Migrasomes are cellular organelles that form as large vesicle-like structures on retraction fibers of migrating cells. Mechanistically, acts as a membrane curvature sensor and participates in stabilizing the migrasome structure in a late stage of biogenesis. May also play a regulatory role for the histamine H4 receptor/HRH4 without affecting histamine binding to HRH4 or signaling. This chain is Tetraspanin-4 (TSPAN4), found in Homo sapiens (Human).